The chain runs to 204 residues: LexA repressor (204 aa).

A DNA-binding region (H-T-H motif) is located at residues 31–51 (VREICAKVGLSSTSTVHGHLS). Residues serine 128 and lysine 165 each act as for autocatalytic cleavage activity in the active site.

This sequence belongs to the peptidase S24 family. As to quaternary structure, homodimer.

It catalyses the reaction Hydrolysis of Ala-|-Gly bond in repressor LexA.. Functionally, represses a number of genes involved in the response to DNA damage (SOS response), including recA and lexA. In the presence of single-stranded DNA, RecA interacts with LexA causing an autocatalytic cleavage which disrupts the DNA-binding part of LexA, leading to derepression of the SOS regulon and eventually DNA repair. The chain is LexA repressor from Clostridium acetobutylicum (strain ATCC 824 / DSM 792 / JCM 1419 / IAM 19013 / LMG 5710 / NBRC 13948 / NRRL B-527 / VKM B-1787 / 2291 / W).